Here is a 707-residue protein sequence, read N- to C-terminus: Choline transporter-like protein 4 (707 aa).

The Cytoplasmic portion of the chain corresponds to 1-32 (MGRKQNENEAHGNSAKYDPSFRGPIKNRGCTD). Residues 33 to 53 (IICCVLFLIFILGYIIVGLVA) traverse the membrane as a helical segment. Residues 54–227 (WVYGDPRQVL…KIFEDFAQSW (174 aa)) lie on the Extracellular side of the membrane. 4 N-linked (GlcNAc...) asparagine glycosylation sites follow: N67, N185, N195, and N196. The chain crosses the membrane as a helical span at residues 228–248 (YWILVALGVALALSLLFILLL). The Cytoplasmic segment spans residues 249 to 250 (RL). The chain crosses the membrane as a helical span at residues 251–271 (VAAPLVLLLIVGVLAVLAYGI). Topologically, residues 272 to 307 (YHCWQQYQVFRDKGASITQLGFTTNFSAYQSVKETW) are extracellular. N296 carries N-linked (GlcNAc...) asparagine glycosylation. The helical transmembrane segment at 308–328 (LAALIVLAVLEGILLLMLIFL) threads the bilayer. Residues 329–356 (RQRIRIAIALLKEASRAVGQMMSTMFYP) lie on the Cytoplasmic side of the membrane. A helical membrane pass occupies residues 357 to 377 (LVTFVLLVICIGYWAVTALYL). Residues 378–452 (ATSGQPQYIY…GVLGLFWTVN (75 aa)) are Extracellular-facing. Residues N391, N403, and N413 are each glycosylated (N-linked (GlcNAc...) asparagine). The helical transmembrane segment at 453–473 (WVLALGQCVLAGAFASFYWAF) threads the bilayer. Residues 474–498 (HKPRDIPTFPLSSAFIRTLRYHTGS) are Cytoplasmic-facing. A helical membrane pass occupies residues 499 to 519 (LAFGALILSLVQIARVILEYI). The Extracellular portion of the chain corresponds to 520–557 (DHKLRGSQNPVARCIICCFKCCLWCLEKFIKFLNRNAY). Residues 558-578 (IMIAIYGKNFCVSAKNAFMLL) form a helical membrane-spanning segment. Over 579 to 594 (MRNVLRVVVLDKVTDL) the chain is Cytoplasmic. Residues 595 to 615 (LLFFGKLLVVGGVGVLSFFFF) form a helical membrane-spanning segment. Residues 616 to 635 (SGRIKGLGKDFENPNLNYYW) are Extracellular-facing. The chain crosses the membrane as a helical span at residues 636–656 (LPIMTSIMGAYVIASGFFSVF). Topologically, residues 657-707 (GMCVDTLFLCFLEDLERNDGSQERPYYMPKALLKILGKKNEAPTGGKTRKK) are cytoplasmic.

This sequence belongs to the CTL (choline transporter-like) family. N-glycosylated; N-glycosylation of Asn-67 and Asn-391 is required for a proper thiamine pyrophosphate uptake. As to expression, expressed in colon and cecum.

The protein resides in the membrane. The protein localises to the apical cell membrane. The catalysed reaction is choline(out) + n H(+)(in) = choline(in) + n H(+)(out). It carries out the reaction thiamine diphosphate(out) = thiamine diphosphate(in). In terms of biological role, choline transporter that plays a role in the choline-acetylcholine system and is required to the efferent innervation of hair cells in the olivocochlear bundle for the maintenance of physiological function of outer hair cells and the protection of hair cells from acoustic injury. Also described as a thiamine pyrophosphate transporter in colon, may mediate the absorption of microbiota-generated thiamine pyrophosphate and contribute to host thiamine (vitamin B1) homeostasis. This Mus musculus (Mouse) protein is Choline transporter-like protein 4.